Reading from the N-terminus, the 520-residue chain is ATP synthase subunit alpha 2 (520 aa).

Residue Gly176–Thr183 participates in ATP binding.

The protein belongs to the ATPase alpha/beta chains family. In terms of assembly, F-type ATPases have 2 components, CF(1) - the catalytic core - and CF(0) - the membrane proton channel. CF(1) has five subunits: alpha(3), beta(3), gamma(1), delta(1), epsilon(1). CF(0) has three main subunits: a(1), b(2) and c(9-12). The alpha and beta chains form an alternating ring which encloses part of the gamma chain. CF(1) is attached to CF(0) by a central stalk formed by the gamma and epsilon chains, while a peripheral stalk is formed by the delta and b chains.

The protein resides in the cell inner membrane. It carries out the reaction ATP + H2O + 4 H(+)(in) = ADP + phosphate + 5 H(+)(out). Functionally, produces ATP from ADP in the presence of a proton gradient across the membrane. The alpha chain is a regulatory subunit. This chain is ATP synthase subunit alpha 2, found in Polaromonas naphthalenivorans (strain CJ2).